The sequence spans 151 residues: Small ribosomal subunit protein uS15 (151 aa).

It belongs to the universal ribosomal protein uS15 family.

The chain is Small ribosomal subunit protein uS15 (RpS13) from Plutella xylostella (Diamondback moth).